The sequence spans 586 residues: Glutamate--tRNA ligase (586 aa).

Residues 84 to 111 form a disordered region; sequence LTDIESEDTTDTYDLPSLPGVSDDEPTQ. Residues 85-94 show a composition bias toward acidic residues; the sequence is TDIESEDTTD. A 'HIGH' region motif is present at residues 119-129; the sequence is PNPNGPWHIGH.

This sequence belongs to the class-I aminoacyl-tRNA synthetase family. Glutamate--tRNA ligase type 2 subfamily.

It is found in the cytoplasm. It carries out the reaction tRNA(Glu) + L-glutamate + ATP = L-glutamyl-tRNA(Glu) + AMP + diphosphate. In terms of biological role, catalyzes the attachment of glutamate to tRNA(Glu) in a two-step reaction: glutamate is first activated by ATP to form Glu-AMP and then transferred to the acceptor end of tRNA(Glu). The chain is Glutamate--tRNA ligase from Haloquadratum walsbyi (strain DSM 16790 / HBSQ001).